A 152-amino-acid chain; its full sequence is Immunity protein YobK (152 aa).

In terms of assembly, interacts with cognate toxin YobL but not with non-cognate putative toxin YeeF. The interaction inhibits the toxic activity of YobL.

The protein localises to the cytoplasm. Its function is as follows. Immunity component of one of 6 LXG toxin-immunity modules in this strain. They promote kin selection, mediate competition in biofilms, and drive spatial segregation of different strains, indicating that LXG toxins may help avoid warfare between strains in biofilms. Mediates intercellular competition during biofilm formation; disruption of the operon disadvantages the bacteria, but overexpression of the cognate immunity protein restores growth in competition with wild-type. In situ neutralizes the toxic effect of cognate toxin YobL. Neutralizes the toxic activity of cognate toxin YobL upon expression in E.coli. Does not have immunity protein activity on other LXG toxins. The protein is Immunity protein YobK (yobK) of Bacillus subtilis (strain 168).